Here is a 470-residue protein sequence, read N- to C-terminus: Siroheme synthase (470 aa).

Residues 1–203 (MEFFPIFLKL…GDEAAARAEM (203 aa)) are precorrin-2 dehydrogenase /sirohydrochlorin ferrochelatase. Residues 22–23 (EV) and 43–44 (PE) each bind NAD(+). Position 128 is a phosphoserine (S128). The tract at residues 216–470 (GAVYLVGAGP…ENSAVTIQED (255 aa)) is uroporphyrinogen-III C-methyltransferase. Residue P225 participates in S-adenosyl-L-methionine binding. D248 serves as the catalytic Proton acceptor. K270 acts as the Proton donor in catalysis. S-adenosyl-L-methionine is bound by residues 301–303 (GGD), M383, and A412.

In the N-terminal section; belongs to the precorrin-2 dehydrogenase / sirohydrochlorin ferrochelatase family. This sequence in the C-terminal section; belongs to the precorrin methyltransferase family.

The catalysed reaction is uroporphyrinogen III + 2 S-adenosyl-L-methionine = precorrin-2 + 2 S-adenosyl-L-homocysteine + H(+). It carries out the reaction precorrin-2 + NAD(+) = sirohydrochlorin + NADH + 2 H(+). It catalyses the reaction siroheme + 2 H(+) = sirohydrochlorin + Fe(2+). The protein operates within cofactor biosynthesis; adenosylcobalamin biosynthesis; precorrin-2 from uroporphyrinogen III: step 1/1. It functions in the pathway cofactor biosynthesis; adenosylcobalamin biosynthesis; sirohydrochlorin from precorrin-2: step 1/1. It participates in porphyrin-containing compound metabolism; siroheme biosynthesis; precorrin-2 from uroporphyrinogen III: step 1/1. Its pathway is porphyrin-containing compound metabolism; siroheme biosynthesis; siroheme from sirohydrochlorin: step 1/1. The protein operates within porphyrin-containing compound metabolism; siroheme biosynthesis; sirohydrochlorin from precorrin-2: step 1/1. Multifunctional enzyme that catalyzes the SAM-dependent methylations of uroporphyrinogen III at position C-2 and C-7 to form precorrin-2 via precorrin-1. Then it catalyzes the NAD-dependent ring dehydrogenation of precorrin-2 to yield sirohydrochlorin. Finally, it catalyzes the ferrochelation of sirohydrochlorin to yield siroheme. The chain is Siroheme synthase from Chromobacterium violaceum (strain ATCC 12472 / DSM 30191 / JCM 1249 / CCUG 213 / NBRC 12614 / NCIMB 9131 / NCTC 9757 / MK).